The primary structure comprises 454 residues: Notoamide biosynthesis cluster protein M' (454 aa).

N-linked (GlcNAc...) asparagine glycans are attached at residues Asn-51 and Asn-74. Residues 205–219 show a composition bias toward basic residues; sequence KARSKEKKPKRKKSK. Residues 205–224 form a disordered region; that stretch reads KARSKEKKPKRKKSKAEKEH. The next 2 helical transmembrane spans lie at 334–354 and 375–395; these read MTTVAFVSMVYLPGTFVSGLF and FWMYWAVTIPLTLLTLGVWGV.

It is found in the membrane. Part of the gene cluster that mediates the biosynthesis of notoamide, a fungal indole alkaloid that belongs to a family of natural products containing a characteristic bicyclo[2.2.2]diazaoctane core. The first step of notoamide biosynthesis involves coupling of L-proline and L-tryptophan by the bimodular NRPS notE', to produce cyclo-L-tryptophan-L-proline called brevianamide F. The reverse prenyltransferase notF' then acts as a deoxybrevianamide E synthase and converts brevianamide F to deoxybrevianamide E via reverse prenylation at C-2 of the indole ring leading to the bicyclo[2.2.2]diazaoctane core. Deoxybrevianamide E is further hydroxylated at C-6 of the indole ring, likely catalyzed by the cytochrome P450 monooxygenase notG', to yield 6-hydroxy-deoxybrevianamide E. 6-hydroxy-deoxybrevianamide E is a specific substrate of the prenyltransferase notC' for normal prenylation at C-7 to produce 6-hydroxy-7-prenyl-deoxybrevianamide, also called notoamide S. As the proposed pivotal branching point in notoamide biosynthesis, notoamide S can be diverted to notoamide E through an oxidative pyran ring closure putatively catalyzed by either notH' cytochrome P450 monooxygenase or the notD' FAD-linked oxidoreductase. This step would be followed by an indole 2,3-epoxidation-initiated pinacol-like rearrangement catalyzed by the notB' FAD-dependent monooxygenase leading to the formation of notoamide C and notoamide D. On the other hand notoamide S is converted to notoamide T by notH' (or notD'), a bifunctional oxidase that also functions as the intramolecular Diels-Alderase responsible for generation of (-)-notoamide T. To generate antipodal (+)-notoaminide T, notH (or notD) in Aspergillus strain MF297-2 is expected to catalyze a Diels-Alder reaction leading to the opposite stereochemistry. The remaining oxidoreductase notD' (or notH') likely catalyzes the oxidative pyran ring formation to yield (-)-stephacidin A. The FAD-dependent monooxygenase notI' is highly similar to notB' and is predicted to catalyze a similar conversion from (-)-stephacidin A to (+)-notoamide B via the 2,3-epoxidation of (-)-stephacidin A followed by a pinacol-type rearrangement. Finally, it remains unclear which enzyme could be responsible for the final hydroxylation steps leading to notoamide A and sclerotiamide. The function of notM' in the notoamide biosynthesis has not been determined yet. The protein is Notoamide biosynthesis cluster protein M' of Aspergillus versicolor.